We begin with the raw amino-acid sequence, 364 residues long: 4-hydroxythreonine-4-phosphate dehydrogenase (364 aa).

The substrate site is built by H138 and T139. H169, H214, and H269 together coordinate a divalent metal cation. K277, N286, and R295 together coordinate substrate.

It belongs to the PdxA family. As to quaternary structure, homodimer. A divalent metal cation serves as cofactor.

It localises to the cytoplasm. It catalyses the reaction 4-(phosphooxy)-L-threonine + NAD(+) = 3-amino-2-oxopropyl phosphate + CO2 + NADH. It participates in cofactor biosynthesis; pyridoxine 5'-phosphate biosynthesis; pyridoxine 5'-phosphate from D-erythrose 4-phosphate: step 4/5. Functionally, catalyzes the NAD(P)-dependent oxidation of 4-(phosphooxy)-L-threonine (HTP) into 2-amino-3-oxo-4-(phosphooxy)butyric acid which spontaneously decarboxylates to form 3-amino-2-oxopropyl phosphate (AHAP). This chain is 4-hydroxythreonine-4-phosphate dehydrogenase, found in Bacteroides thetaiotaomicron (strain ATCC 29148 / DSM 2079 / JCM 5827 / CCUG 10774 / NCTC 10582 / VPI-5482 / E50).